We begin with the raw amino-acid sequence, 753 residues long: Translation initiation factor IF-2 (753 aa).

Residues M1–A166 are disordered. Composition is skewed to low complexity over residues S19–A43, N71–R81, and T102–R122. Basic and acidic residues predominate over residues P133–L146. Residues T153–R162 show a composition bias toward low complexity. The tr-type G domain maps to P249 to R418. The tract at residues G258–T265 is G1. GTP is bound at residue G258–T265. Positions G283 to H287 are G2. A G3 region spans residues D304–G307. GTP contacts are provided by residues D304–H308 and N358–D361. A G4 region spans residues N358–D361. The segment at S394–R396 is G5.

It belongs to the TRAFAC class translation factor GTPase superfamily. Classic translation factor GTPase family. IF-2 subfamily.

It is found in the cytoplasm. In terms of biological role, one of the essential components for the initiation of protein synthesis. Protects formylmethionyl-tRNA from spontaneous hydrolysis and promotes its binding to the 30S ribosomal subunits. Also involved in the hydrolysis of GTP during the formation of the 70S ribosomal complex. The protein is Translation initiation factor IF-2 of Chloroflexus aggregans (strain MD-66 / DSM 9485).